A 192-amino-acid polypeptide reads, in one-letter code: Ribose 1,5-bisphosphate phosphokinase PhnN (192 aa).

The protein belongs to the ribose 1,5-bisphosphokinase family.

It catalyses the reaction alpha-D-ribose 1,5-bisphosphate + ATP = 5-phospho-alpha-D-ribose 1-diphosphate + ADP. The protein operates within metabolic intermediate biosynthesis; 5-phospho-alpha-D-ribose 1-diphosphate biosynthesis; 5-phospho-alpha-D-ribose 1-diphosphate from D-ribose 5-phosphate (route II): step 3/3. Functionally, catalyzes the phosphorylation of ribose 1,5-bisphosphate to 5-phospho-D-ribosyl alpha-1-diphosphate (PRPP). In Achromobacter xylosoxidans (strain A8), this protein is Ribose 1,5-bisphosphate phosphokinase PhnN.